A 94-amino-acid polypeptide reads, in one-letter code: uncharacterized protein (94 aa).

This is an uncharacterized protein from Escherichia coli (strain K12).